The primary structure comprises 410 residues: Peptidase T (410 aa).

His-79 provides a ligand contact to Zn(2+). Residue Asp-81 is part of the active site. Position 142 (Asp-142) interacts with Zn(2+). The active-site Proton acceptor is the Glu-176. Zn(2+)-binding residues include Glu-177, Asp-199, and His-381.

The protein belongs to the peptidase M20B family. It depends on Zn(2+) as a cofactor.

Its subcellular location is the cytoplasm. It carries out the reaction Release of the N-terminal residue from a tripeptide.. In terms of biological role, cleaves the N-terminal amino acid of tripeptides. The protein is Peptidase T of Listeria innocua serovar 6a (strain ATCC BAA-680 / CLIP 11262).